A 226-amino-acid chain; its full sequence is Ribonuclease 3 (226 aa).

One can recognise an RNase III domain in the interval 6 to 128 (INRLQRKLGY…LIGGIFLDSD (123 aa)). E41 contributes to the Mg(2+) binding site. The active site involves D45. Positions 114 and 117 each coordinate Mg(2+). E117 is an active-site residue. A DRBM domain is found at 155 to 225 (DPKTRLQEYL…AEQALKQLEL (71 aa)).

This sequence belongs to the ribonuclease III family. As to quaternary structure, homodimer. It depends on Mg(2+) as a cofactor.

It localises to the cytoplasm. It catalyses the reaction Endonucleolytic cleavage to 5'-phosphomonoester.. Its function is as follows. Digests double-stranded RNA. Involved in the processing of primary rRNA transcript to yield the immediate precursors to the large and small rRNAs (23S and 16S). Processes some mRNAs, and tRNAs when they are encoded in the rRNA operon. Processes pre-crRNA and tracrRNA of type II CRISPR loci if present in the organism. The protein is Ribonuclease 3 of Yersinia enterocolitica serotype O:8 / biotype 1B (strain NCTC 13174 / 8081).